The following is a 378-amino-acid chain: Homeobox protein Meis3 (378 aa).

Residues 24 to 57 are disordered; the sequence is FSEAAPSVPRAPGPYTPHRPPQLQAPGLDSDSLK. Residues 32 to 43 show a composition bias toward pro residues; it reads PRAPGPYTPHRP. Positions 99 to 182 constitute an MEIS N-terminal domain; that stretch reads GGDVCSSDSF…PIDLVIEDRD (84 aa). The tract at residues 203-265 is disordered; it reads NTTWIRDHED…DEDLDLERRR (63 aa). Positions 230 to 244 are enriched in low complexity; the sequence is SQSGDNSSDQGDGLD. The homeobox; TALE-type DNA-binding region spans 265–327; the sequence is RNKKRGIFPK…NARRRIVQPM (63 aa).

It belongs to the TALE/MEIS homeobox family. As to expression, expressed at high levels in the brain. Significant expression also observed in the heart, spleen and lung. Expressed in pancreatic islets (beta-cells and non-beta-cells).

It localises to the nucleus. Its function is as follows. Transcriptional regulator which directly modulates PDPK1 expression, thus promoting survival of pancreatic beta-cells. Also regulates expression of NDFIP1, BNIP3, and CCNG1. The protein is Homeobox protein Meis3 (Meis3) of Mus musculus (Mouse).